A 271-amino-acid polypeptide reads, in one-letter code: Glutamate racemase (271 aa).

Substrate is bound by residues 10–11 (DS) and 42–43 (YG). The active-site Proton donor/acceptor is the C73. A substrate-binding site is contributed by 74–75 (NT). The active-site Proton donor/acceptor is C183. 184-185 (TH) serves as a coordination point for substrate.

It belongs to the aspartate/glutamate racemases family.

It carries out the reaction L-glutamate = D-glutamate. It participates in cell wall biogenesis; peptidoglycan biosynthesis. Functionally, provides the (R)-glutamate required for cell wall biosynthesis. The polypeptide is Glutamate racemase (Streptococcus thermophilus (strain ATCC BAA-250 / LMG 18311)).